The following is a 153-amino-acid chain: uncharacterized protein (153 aa).

The N-terminal stretch at 1 to 19 is a signal peptide; sequence MRKYIPLVLFIFSWPVLCA. Residues R46, E54, and R88 contribute to the active site.

This sequence belongs to the thermonuclease family.

This is an uncharacterized protein from Escherichia coli.